A 245-amino-acid polypeptide reads, in one-letter code: Tetraspanin-6 (245 aa).

The Cytoplasmic portion of the chain corresponds to 1-19; that stretch reads MASPSRRLQTKPVITCFKS. Residues 20–40 traverse the membrane as a helical segment; the sequence is VLLIYTFIFWITGVILLAVGI. Residues 41–59 are Extracellular-facing; sequence WGKVSLENYFSLLNEKATN. The helical transmembrane segment at 60 to 80 threads the bilayer; it reads VPFVLIATGTVIILLGTFGCF. The Cytoplasmic segment spans residues 81–93; the sequence is ATCRASAWMLKLY. The helical transmembrane segment at 94–114 threads the bilayer; the sequence is AMFLTLIFLVELVAAIVGFVF. Residues 115–208 lie on the Extracellular side of the membrane; sequence RHEIKNSFKN…IKVMTIIESE (94 aa). A glycan (N-linked (GlcNAc...) asparagine) is linked at Asn-134. A helical transmembrane segment spans residues 209-229; it reads MGVVAGISFGVACFQLIGIFL. At 230–245 the chain is on the cytoplasmic side; that stretch reads AYCLSRAITNNQYEIV.

It belongs to the tetraspanin (TM4SF) family.

The protein resides in the membrane. The sequence is that of Tetraspanin-6 (TSPAN6) from Pongo abelii (Sumatran orangutan).